We begin with the raw amino-acid sequence, 201 residues long: MVSWIISRLVVLIFGTLYPAYYSYKAVKSKDIKEYVKWMMYWIIFALFTTAETFTDIFLCWFPFYYELKIAFVAWLLSPYTKGSSLLYRKFVHPTLSSKEKEIDDCLVQAKDRSYDALVHFGKRGLNVAATAAVMAASKGQGALSERLRSFSMQDLTTIRGDGAPAPSGPPPPGTGRSSGKHSQPKMSRSASESAGSSGTA.

2 consecutive transmembrane segments (helical) span residues 1 to 21 and 35 to 55; these read MVSW…YPAY and YVKW…ETFT. Phosphoserine is present on Ser152. Residues 158–201 are disordered; sequence TIRGDGAPAPSGPPPPGTGRSSGKHSQPKMSRSASESAGSSGTA. Residues 188–201 are compositionally biased toward low complexity; sequence SRSASESAGSSGTA.

This sequence belongs to the DP1 family. In terms of assembly, interacts with OLFR992. Interacts with SPAST and ATL1. Interacts (via C-terminus) with microtubules. Interacts with ZFYVE27. Detected in olfactory sensory neurons of the olfactory epithelium, and in total brain.

Its subcellular location is the membrane. It localises to the mitochondrion membrane. It is found in the endoplasmic reticulum. In terms of biological role, required for endoplasmic reticulum (ER) network formation, shaping and remodeling; it links ER tubules to the cytoskeleton. May also enhance the cell surface expression of odorant receptors. The protein is Receptor expression-enhancing protein 1 (Reep1) of Mus musculus (Mouse).